A 919-amino-acid polypeptide reads, in one-letter code: Bifunctional uridylyltransferase/uridylyl-removing enzyme (919 aa).

Positions 1-373 (MTDPKVPRQR…LAGFNAKSRM (373 aa)) are uridylyltransferase. A uridylyl-removing region spans residues 374–727 (LKGYTVFGGK…CEFDEERGAT (354 aa)). The HD domain occupies 489 to 611 (VDEHTIRAIG…VQSLERLRHL (123 aa)). ACT domains follow at residues 728 to 811 (LVTV…LAKR) and 839 to 919 (VIEV…LEPA).

This sequence belongs to the GlnD family. Requires Mg(2+) as cofactor.

It catalyses the reaction [protein-PII]-L-tyrosine + UTP = [protein-PII]-uridylyl-L-tyrosine + diphosphate. It carries out the reaction [protein-PII]-uridylyl-L-tyrosine + H2O = [protein-PII]-L-tyrosine + UMP + H(+). Its activity is regulated as follows. Uridylyltransferase (UTase) activity is inhibited by glutamine, while glutamine activates uridylyl-removing (UR) activity. Functionally, modifies, by uridylylation and deuridylylation, the PII regulatory proteins (GlnB and homologs), in response to the nitrogen status of the cell that GlnD senses through the glutamine level. Under low glutamine levels, catalyzes the conversion of the PII proteins and UTP to PII-UMP and PPi, while under higher glutamine levels, GlnD hydrolyzes PII-UMP to PII and UMP (deuridylylation). Thus, controls uridylylation state and activity of the PII proteins, and plays an important role in the regulation of nitrogen assimilation and metabolism. The sequence is that of Bifunctional uridylyltransferase/uridylyl-removing enzyme from Erythrobacter litoralis (strain HTCC2594).